Reading from the N-terminus, the 103-residue chain is PTS system oligo-beta-mannoside-specific EIIB component (103 aa).

Residues 1–103 form the PTS EIIB type-3 domain; that stretch reads MKKILLACSS…EQALSLMVNQ (103 aa). The active-site Phosphocysteine intermediate is the Cys8. Residue Cys8 is modified to Phosphocysteine; by EIIA.

It is found in the cytoplasm. The catalysed reaction is D-cellobiose(out) + N(pros)-phospho-L-histidyl-[protein] = 6-phospho-beta-D-glucosyl-(1-&gt;4)-D-glucose(in) + L-histidyl-[protein]. In terms of biological role, the phosphoenolpyruvate-dependent sugar phosphotransferase system (sugar PTS), a major carbohydrate active transport system, catalyzes the phosphorylation of incoming sugar substrates concomitantly with their translocation across the cell membrane. The enzyme II GmuABC PTS system is involved in the transport of oligo-glucomannans such as cellobiose or mannobiose. This is PTS system oligo-beta-mannoside-specific EIIB component from Bacillus subtilis (strain 168).